The chain runs to 79 residues: Small ribosomal subunit protein eS17 (79 aa).

This sequence belongs to the eukaryotic ribosomal protein eS17 family.

In Saccharolobus solfataricus (strain ATCC 35092 / DSM 1617 / JCM 11322 / P2) (Sulfolobus solfataricus), this protein is Small ribosomal subunit protein eS17.